Here is a 219-residue protein sequence, read N- to C-terminus: UPF0173 metal-dependent hydrolase Mhun_1705 (219 aa).

Belongs to the UPF0173 family.

The sequence is that of UPF0173 metal-dependent hydrolase Mhun_1705 from Methanospirillum hungatei JF-1 (strain ATCC 27890 / DSM 864 / NBRC 100397 / JF-1).